The primary structure comprises 2376 residues: Cell morphogenesis protein PAG1 (2376 aa).

Positions 1-30 are disordered; that stretch reads MASRFTFPPQRDQGIGFTFPPTNKAEGSSN. Ser141 is modified (phosphoserine). The interval 275–294 is disordered; sequence SSSNTTSKYKHNNNTNNLPG. Phosphoserine is present on Ser1144. Thr2264 is subject to Phosphothreonine. 2 positions are modified to phosphoserine: Ser2267 and Ser2355.

To S.pombe mor2. In terms of assembly, associates with CBK1.

Seems to play a role in cell morphogenesis. The chain is Cell morphogenesis protein PAG1 (TAO3) from Saccharomyces cerevisiae (strain ATCC 204508 / S288c) (Baker's yeast).